The following is a 363-amino-acid chain: Chorismate synthase (363 aa).

An NADP(+)-binding site is contributed by Arg47. FMN contacts are provided by residues 124 to 126, Gly285, 300 to 304, and Arg326; these read RSS and KPTAT.

The protein belongs to the chorismate synthase family. As to quaternary structure, homotetramer. Requires FMNH2 as cofactor.

The enzyme catalyses 5-O-(1-carboxyvinyl)-3-phosphoshikimate = chorismate + phosphate. It participates in metabolic intermediate biosynthesis; chorismate biosynthesis; chorismate from D-erythrose 4-phosphate and phosphoenolpyruvate: step 7/7. Functionally, catalyzes the anti-1,4-elimination of the C-3 phosphate and the C-6 proR hydrogen from 5-enolpyruvylshikimate-3-phosphate (EPSP) to yield chorismate, which is the branch point compound that serves as the starting substrate for the three terminal pathways of aromatic amino acid biosynthesis. This reaction introduces a second double bond into the aromatic ring system. The sequence is that of Chorismate synthase from Opitutus terrae (strain DSM 11246 / JCM 15787 / PB90-1).